The primary structure comprises 797 residues: Plakophilin-3 (797 aa).

Positions 58–81 (GQQSRHNGSAELDGSAESARGMPR) are disordered. Arg81 is subject to Omega-N-methylarginine. A phosphoserine mark is found at Ser123, Ser180, and Ser183. Tyr195 carries the phosphotyrosine modification. Positions 219–228 (ASSGSSRAGG) are enriched in low complexity. The tract at residues 219-241 (ASSGSSRAGGLDWPEATEGPPSR) is disordered. Ser240 is modified (phosphoserine). Residue Thr250 is modified to Phosphothreonine. Positions 253–274 (RFQSSHRSRGGTGSVSGAGLEP) are disordered. Arg261 carries the omega-N-methylarginine modification. Residues 283-288 (SLSLSL) form a required for interaction with SFN region. 4 positions are modified to phosphoserine: Ser285, Ser313, Ser314, and Ser331. Residues 294 to 724 (LPDVRGLDSY…AEVLVNIIAV (431 aa)) are required for interaction with GSK3B. ARM repeat units follow at residues 305–348 (GHRT…HRCY), 351–390 (AAAKKQARSLQAVPRLVKLFNHANQEVQRHATGAMRNLIY), 393–432 (VDNKLALVEENGIFELLRTLREQDDELRKNVTGILWNLSS), 449–487 (TDLVLSPLSGAGGPPLIQQNASEAEIFYNATGFLRNLSS), 491–536 (ATRQ…NLSY), 596–637 (PKGL…NITA), 645–684 (VLSRLALEQERILNPLLDRVRTADHNQLRSLTGLIRNLSR), and 689–730 (KDEM…NLVV). The tract at residues 516–797 (VGKCEDKSVE…GYRKEDFLGP (282 aa)) is required for binding to PKP2 mRNA.

It belongs to the beta-catenin family. In terms of assembly, found in a complex composed of CDH1, RAP1A and PKP3; PKP3 acts as a scaffold protein within the complex, the complex is required for CDH1 localization to mature desmosome cell junctions. Interacts with FXR1; the interaction facilitates the binding of PKP3 to PKP2 mRNA. Interacts (via ARM repeats) with GSK3B; the interaction may be involved in PKP3 protein degradation. Interacts with hyperphosphorylated and hypophosphorylated RB1; the interaction inhibits RB1 interaction with and repression of the transcription factor E2F1, potentially via sequestering RB1 to the cytoplasm. Interacts with CDKN1A; the interaction sequesters CDKN1A to the cytoplasm thereby repressing its role as an inhibitor of CDK4- and CDK6-driven RB1 phosphorylation. Interacts (via N-terminus) with SFN; the interaction maintains the cytoplasmic pool of PKP3, facilitates PKP3 exchange at desmosomes and restricts PKP3 localization to existing desmosome cell junctions. Interacts (via N-terminus) with JUP; the interaction is required for PKP3 localization to desmosome cell-cell junctions. Post-translationally, phosphorylated at Ser-285 when localized to the cytoplasm, PKP3 at desmosome cell junctions is not phosphorylated. Phosphorylation at Try-195 by SRC is induced by reactive oxygen species and potentially acts as a release mechanism from desmosome cell-cell junctions. Expressed in all layers of the epidermis, but is most abundant in the basal layer (at protein level). Expressed in keratinocytes of the epidermis at birth (at protein level). Expressed in the anagen non-keratinized inner root sheath cuticle and hair cuticle (at protein level). Also expressed in the matrix, precursors of the inner root sheath and hair shaft lineages (at protein level). Expressed at apical membranes in the outer hair root sheath and basal layer keratinocytes (at protein level). Expressed in intestinal epithelial cells and lamina propria of the ileum (at protein level). Expressed in keratinocytes (at protein level).

The protein resides in the nucleus. It is found in the cell junction. It localises to the desmosome. The protein localises to the cytoplasm. Its subcellular location is the cell membrane. The protein resides in the adherens junction. A component of desmosome cell-cell junctions which are required for positive regulation of cellular adhesion. Required for the localization of DSG2, DSP and PKP2 to mature desmosome junctions. May also play a role in the maintenance of DSG3 protein abundance in keratinocytes. Required for the formation of DSP-containing desmosome precursors in the cytoplasm during desmosome assembly. Also regulates the accumulation of CDH1 to mature desmosome junctions, via cAMP-dependent signaling and its interaction with activated RAP1A. Positively regulates the stabilization of PKP2 mRNA and therefore protein abundance, via its interaction with FXR1, may also regulate the protein abundance of DSP via the same mechanism. May also regulate the protein abundance of the desmosome component PKP1. Required for the organization of desmosome junctions at intercellular borders between basal keratinocytes of the epidermis, as a result plays a role in maintenance of the dermal barrier and regulation of the dermal inflammatory response. Required during epidermal keratinocyte differentiation for cell adherence at tricellular cell-cell contacts, via regulation of the timely formation of adherens junctions and desmosomes in a calcium-dependent manner, and may also play a role in the organization of the intracellular actin fiber belt. Acts as a negative regulator of the inflammatory response in hematopoietic cells of the skin and intestine, via modulation of proinflammatory cytokine production. Important for epithelial barrier maintenance in the intestine to reduce intestinal permeability, thereby plays a role in protection from intestinal-derived endotoxemia. Required for the development of hair follicles, via a role in the regulation of inner root sheaf length, correct alignment and anterior-posterior polarity of hair follicles. Promotes proliferation and cell-cycle G1/S phase transition of keratinocytes. Promotes E2F1-driven transcription of G1/S phase promoting genes by acting to release E2F1 from its inhibitory interaction with RB1, via sequestering RB1 and CDKN1A to the cytoplasm and thereby increasing CDK4- and CDK6-driven phosphorylation of RB1. May act as a scaffold protein to facilitate MAPK phosphorylation of RPS6KA protein family members and subsequently promote downstream EGFR signaling. May play a role in the positive regulation of transcription of Wnt-mediated TCF-responsive target genes. This is Plakophilin-3 (Pkp3) from Mus musculus (Mouse).